A 301-amino-acid polypeptide reads, in one-letter code: ATP synthase gamma chain (301 aa).

The protein belongs to the ATPase gamma chain family. In terms of assembly, F-type ATPases have 2 components, CF(1) - the catalytic core - and CF(0) - the membrane proton channel. CF(1) has five subunits: alpha(3), beta(3), gamma(1), delta(1), epsilon(1). CF(0) has three main subunits: a, b and c.

The protein resides in the cell inner membrane. Functionally, produces ATP from ADP in the presence of a proton gradient across the membrane. The gamma chain is believed to be important in regulating ATPase activity and the flow of protons through the CF(0) complex. This chain is ATP synthase gamma chain, found in Helicobacter pylori (strain J99 / ATCC 700824) (Campylobacter pylori J99).